A 221-amino-acid polypeptide reads, in one-letter code: GDP-perosamine N-acetyltransferase (221 aa).

H139 functions as the Proton acceptor in the catalytic mechanism.

This sequence belongs to the transferase hexapeptide repeat family. Homotrimer.

It carries out the reaction GDP-alpha-D-perosamine + acetyl-CoA = GDP-N-acetyl-alpha-D-perosamine + CoA + H(+). It functions in the pathway bacterial outer membrane biogenesis; LPS O-antigen biosynthesis. Its function is as follows. Catalyzes the transfer of an acetyl residue from acetyl-CoA onto GDP-perosamine to form GDP-N-acetyl-perosamine. This Escherichia coli O157:H7 protein is GDP-perosamine N-acetyltransferase.